Reading from the N-terminus, the 465-residue chain is MENFSIFNVTVNVWHADLDVGNSDLSLRALTGLLLSLLILSTLLGNTLVCLAVIKFRHLRSKVTNFFVISLAVSDLFVALLVMPWKAVTEVAGFWVFGDFCDTWVAFDIMCSTASILNLCIISLDRYWAIASPFRYERKMTQRVAFIMIGVAWTLSILISFIPVQLSWHKSHEADEELNGVNHTENCDSSLNRTYAISSSLISFYIPVVIMIGTYTRIYRIAQTQIRRISSLERAVEHAQRCSSRLSNENSLKTSFRKETKVLKTLSIIMGVFVFCWLPFFVLNCMIPFCHMNLPGQNEPEPPCVSETTFNIFVWFGWANSSLNPVIYAFNADFRKAFTTILGCNRFCSSNNVEAVNFSNELVSYHHDTTFQKDIPVTFNNSHLPNVVDQDQEVLEGTCFDKVSVLSTSHGTRSQKNLHLPAGVQFECEAEITLETITPFTSTGPLECLPQLVADEDRHYTTKLY.

The Extracellular portion of the chain corresponds to 1–30; the sequence is MENFSIFNVTVNVWHADLDVGNSDLSLRAL. Asparagine 3 and asparagine 8 each carry an N-linked (GlcNAc...) asparagine glycan. A helical membrane pass occupies residues 31–54; the sequence is TGLLLSLLILSTLLGNTLVCLAVI. Over 55–65 the chain is Cytoplasmic; that stretch reads KFRHLRSKVTN. A helical transmembrane segment spans residues 66 to 92; sequence FFVISLAVSDLFVALLVMPWKAVTEVA. The Extracellular portion of the chain corresponds to 93 to 101; sequence GFWVFGDFC. A disulfide bond links cysteine 101 and cysteine 187. A helical membrane pass occupies residues 102–124; that stretch reads DTWVAFDIMCSTASILNLCIISL. Topologically, residues 125–143 are cytoplasmic; the sequence is DRYWAIASPFRYERKMTQR. Residues 144–168 form a helical membrane-spanning segment; that stretch reads VAFIMIGVAWTLSILISFIPVQLSW. At 169 to 193 the chain is on the extracellular side; sequence HKSHEADEELNGVNHTENCDSSLNR. A helical membrane pass occupies residues 194–219; it reads TYAISSSLISFYIPVVIMIGTYTRIY. Over 220–264 the chain is Cytoplasmic; that stretch reads RIAQTQIRRISSLERAVEHAQRCSSRLSNENSLKTSFRKETKVLK. Residues 265–291 form a helical membrane-spanning segment; the sequence is TLSIIMGVFVFCWLPFFVLNCMIPFCH. Residues 292–309 lie on the Extracellular side of the membrane; sequence MNLPGQNEPEPPCVSETT. Residues 310–334 traverse the membrane as a helical segment; the sequence is FNIFVWFGWANSSLNPVIYAFNADF. At 335–465 the chain is on the cytoplasmic side; sequence RKAFTTILGC…EDRHYTTKLY (131 aa). Cysteine 344 carries the S-palmitoyl cysteine lipid modification.

Belongs to the G-protein coupled receptor 1 family. Brain and kidney.

It is found in the cell membrane. The protein resides in the cell projection. It localises to the cilium membrane. Its function is as follows. This is one of the five types (D1 to D5) of receptors for dopamine. The activity of this receptor is mediated by G proteins which activate adenylyl cyclase. The protein is D(1C) dopamine receptor (drd1c) of Xenopus laevis (African clawed frog).